We begin with the raw amino-acid sequence, 365 residues long: Serine/threonine-protein phosphatase 2A activator 1 (365 aa).

The interval 321–349 is disordered; it reads YEAPSETSEKPAAGTAHTTTTTMPPPRMT. Positions 331–342 are enriched in low complexity; the sequence is PAAGTAHTTTTT.

This sequence belongs to the PTPA-type PPIase family.

It localises to the cytoplasm. Its subcellular location is the nucleus. It catalyses the reaction [protein]-peptidylproline (omega=180) = [protein]-peptidylproline (omega=0). In terms of biological role, PPIases accelerate the folding of proteins. It catalyzes the cis-trans isomerization of proline imidic peptide bonds in oligopeptides. Acts as a regulatory subunit for PP2A-like phosphatases modulating their activity or substrate specificity, probably by inducing a conformational change in the catalytic subunit, a direct target of the PPIase. Can reactivate inactive phosphatase PP2A-phosphatase methylesterase complexes (PP2Ai) in presence of ATP and Mg(2+) by dissociating the inactive form from the complex. This chain is Serine/threonine-protein phosphatase 2A activator 1 (RRD1), found in Eremothecium gossypii (strain ATCC 10895 / CBS 109.51 / FGSC 9923 / NRRL Y-1056) (Yeast).